A 26-amino-acid polypeptide reads, in one-letter code: Oxyopinin-3a (26 aa).

Expressed by the venom gland.

It is found in the secreted. Functionally, may have cytolytic and antimicrobial activity. The protein is Oxyopinin-3a of Oxyopes takobius (Lynx spider).